Consider the following 285-residue polypeptide: MKGATNLFKSMRKPTNVGNFRQFSVNQVNSDNKRSEPGKKTHFGFTDVDEAEKEQKVHHVFANVAKKYDLMNDAMSMGVHRLWKDYYVGGLQVPYNAKCLDMAGGTGDIAFRILRHSPTAKVTVSDINQPMLDVGKKRAEKERDIQPSRAEWVCANAEQMPFESNTYDLFTMSFGIRNCTHPEKVVREAFRVLKPGGQLAILEFSEVNSALKPIYDAYSFNVIPVLGEILASDRASYQYLVESIRKFPNQDEFARIIREEGFSNVRYENLTFGVCSIHKGMKPRK.

Residues 1–30 (MKGATNLFKSMRKPTNVGNFRQFSVNQVNS) constitute a mitochondrion transit peptide. S-adenosyl-L-methionine is bound by residues Thr106, Asp126, 156–157 (NA), and Ser173.

This sequence belongs to the class I-like SAM-binding methyltransferase superfamily. MenG/UbiE family. Component of a multi-subunit COQ enzyme complex.

It localises to the mitochondrion inner membrane. The catalysed reaction is a 2-methoxy-6-(all-trans-polyprenyl)benzene-1,4-diol + S-adenosyl-L-methionine = a 5-methoxy-2-methyl-3-(all-trans-polyprenyl)benzene-1,4-diol + S-adenosyl-L-homocysteine + H(+). Its pathway is cofactor biosynthesis; ubiquinone biosynthesis. In terms of biological role, methyltransferase required for the conversion of 2-polyprenyl-6-methoxy-1,4-benzoquinol (DDMQH2) to 2-polyprenyl-3-methyl-6-methoxy-1,4-benzoquinol (DMQH2). The polypeptide is 2-methoxy-6-polyprenyl-1,4-benzoquinol methylase, mitochondrial (Caenorhabditis elegans).